The chain runs to 264 residues: Acid phosphatase (264 aa).

A signal peptide spans 1-28; the sequence is MIKVPRFICMIALTSGILASGLSQSVSA.

It belongs to the class A bacterial acid phosphatase family. Mg(2+) serves as cofactor. Zn(2+) is required as a cofactor.

It localises to the periplasm. The enzyme catalyses a phosphate monoester + H2O = an alcohol + phosphate. This chain is Acid phosphatase (phoC), found in Zymomonas mobilis subsp. mobilis (strain ATCC 31821 / ZM4 / CP4).